Here is a 437-residue protein sequence, read N- to C-terminus: Phosphatidylserine decarboxylase proenzyme 1, mitochondrial (437 aa).

A mitochondrion-targeting transit peptide spans 1 to 18 (MLKFHRNVKPQFGAFARY). Residues 19-38 (SSLGKHNSRKRVGIIRLAYG) are Mitochondrial matrix-facing. The chain crosses the membrane as a helical span at residues 39 to 57 (LTGIGLVGLAGFAWAQDRH). Over 58-437 (EKTYQKKGVQ…PLGRVVPSSH (380 aa)) the chain is Mitochondrial intermembrane. Catalysis depends on charge relay system; for autoendoproteolytic cleavage activity residues aspartate 157, histidine 287, and serine 401. Serine 401 (schiff-base intermediate with substrate; via pyruvic acid; for decarboxylase activity) is an active-site residue. Pyruvic acid (Ser); by autocatalysis is present on serine 401.

The protein belongs to the phosphatidylserine decarboxylase family. PSD-B subfamily. Eukaryotic type I sub-subfamily. Heterodimer of a large membrane-associated beta subunit and a small pyruvoyl-containing alpha subunit. Requires pyruvate as cofactor. Is synthesized initially as an inactive proenzyme. Formation of the active enzyme involves a self-maturation process in which the active site pyruvoyl group is generated from an internal serine residue via an autocatalytic post-translational modification. Two non-identical subunits are generated from the proenzyme in this reaction, and the pyruvate is formed at the N-terminus of the alpha chain, which is derived from the carboxyl end of the proenzyme. The autoendoproteolytic cleavage occurs by a canonical serine protease mechanism, in which the side chain hydroxyl group of the serine supplies its oxygen atom to form the C-terminus of the beta chain, while the remainder of the serine residue undergoes an oxidative deamination to produce ammonia and the pyruvoyl prosthetic group on the alpha chain. During this reaction, the Ser that is part of the protease active site of the proenzyme becomes the pyruvoyl prosthetic group, which constitutes an essential element of the active site of the mature decarboxylase.

The protein resides in the mitochondrion. It is found in the mitochondrion inner membrane. The enzyme catalyses a 1,2-diacyl-sn-glycero-3-phospho-L-serine + H(+) = a 1,2-diacyl-sn-glycero-3-phosphoethanolamine + CO2. It functions in the pathway phospholipid metabolism; phosphatidylethanolamine biosynthesis; phosphatidylethanolamine from CDP-diacylglycerol: step 2/2. Catalyzes the formation of phosphatidylethanolamine (PtdEtn) from phosphatidylserine (PtdSer). Plays a central role in phospholipid metabolism and in the interorganelle trafficking of phosphatidylserine. Together with psd2 and psd3, responsible for the majority of phosphatidylethanolamine synthesis. This chain is Phosphatidylserine decarboxylase proenzyme 1, mitochondrial, found in Schizosaccharomyces pombe (strain 972 / ATCC 24843) (Fission yeast).